The following is a 149-amino-acid chain: NADH-quinone oxidoreductase subunit I 1 (149 aa).

2 4Fe-4S ferredoxin-type domains span residues 51-82 and 93-122; these read LKSFADTGTHKCIACGTCERMCPSNVIKVQGT and THYVIDFTRCSLCGICVESCPTGTLQYSTE. [4Fe-4S] cluster contacts are provided by Cys62, Cys65, Cys68, Cys72, Cys102, Cys105, Cys108, and Cys112.

The protein belongs to the complex I 23 kDa subunit family. As to quaternary structure, NDH-1 is composed of 14 different subunits. Subunits NuoA, H, J, K, L, M, N constitute the membrane sector of the complex. [4Fe-4S] cluster is required as a cofactor.

It is found in the cell inner membrane. The catalysed reaction is a quinone + NADH + 5 H(+)(in) = a quinol + NAD(+) + 4 H(+)(out). Its function is as follows. NDH-1 shuttles electrons from NADH, via FMN and iron-sulfur (Fe-S) centers, to quinones in the respiratory chain. The immediate electron acceptor for the enzyme in this species is believed to be ubiquinone. Couples the redox reaction to proton translocation (for every two electrons transferred, four hydrogen ions are translocated across the cytoplasmic membrane), and thus conserves the redox energy in a proton gradient. This is NADH-quinone oxidoreductase subunit I 1 from Syntrophobacter fumaroxidans (strain DSM 10017 / MPOB).